The following is a 475-amino-acid chain: MSPQTETKASVGFKAGVKDYKLNYYTPDYVTKDTDILAAFRVTPQPGVPPEEAGAAVAAESSTGTWTTVWTDGLTSLDRYKGRCYHIEPVAGEDNQYICYVAYPLDLFEEGSVTNMFTSIVGNVFGFKALRALRLEDLRIPTSYVKTFQGPPHGIQVERDKLNKYGRPLLGCTIKPKLGLSAKNYGRAVYECLRGGLDFTKDDENVNSQPFMRWRDRFLFCAEALFKAQAETGEIKGHYLNATAGTCEEMMKRAVFARELGVPIVMHDYLTGGFTANTTLAHYCRDNGLLLHIHRAMHAVIDRQKNHGIHFRVLAKALRMSGGDHIHAGTVVGKLEGEREITLGFVDLLRDDFIEKDRSRGIYFTQDWVSLPGVLPVASGGIHVWHMPALTEIFGDDSVLQFGGGTLGHPWGNAPGAVANRVALEACVQARNEGRDLAREGNEIIRAACKWSPELAAACEVWKEIKFEFEAMDTL.

Residues 1–2 constitute a propeptide that is removed on maturation; it reads MS. The residue at position 3 (proline 3) is an N-acetylproline. Position 14 is an N6,N6,N6-trimethyllysine (lysine 14). Positions 123 and 173 each coordinate substrate. Catalysis depends on lysine 175, which acts as the Proton acceptor. Lysine 177 serves as a coordination point for substrate. The Mg(2+) site is built by lysine 201, aspartate 203, and glutamate 204. Lysine 201 is subject to N6-carboxylysine. The active-site Proton acceptor is histidine 294. Substrate-binding residues include arginine 295, histidine 327, and serine 379.

Belongs to the RuBisCO large chain family. Type I subfamily. Heterohexadecamer of 8 large chains and 8 small chains; disulfide-linked. The disulfide link is formed within the large subunit homodimers. Mg(2+) serves as cofactor. The disulfide bond which can form in the large chain dimeric partners within the hexadecamer appears to be associated with oxidative stress and protein turnover.

It localises to the plastid. Its subcellular location is the chloroplast. The enzyme catalyses 2 (2R)-3-phosphoglycerate + 2 H(+) = D-ribulose 1,5-bisphosphate + CO2 + H2O. It carries out the reaction D-ribulose 1,5-bisphosphate + O2 = 2-phosphoglycolate + (2R)-3-phosphoglycerate + 2 H(+). In terms of biological role, ruBisCO catalyzes two reactions: the carboxylation of D-ribulose 1,5-bisphosphate, the primary event in carbon dioxide fixation, as well as the oxidative fragmentation of the pentose substrate in the photorespiration process. Both reactions occur simultaneously and in competition at the same active site. The sequence is that of Ribulose bisphosphate carboxylase large chain from Nandina domestica (Heavenly bamboo).